Here is a 689-residue protein sequence, read N- to C-terminus: MTTQNFLAEIGTEELPPKALKKLATAFAENMELELNQAGLAFESVQWFAAPRRLAVKVLALATSQPSKEIEKRGPAVSAAFDAEGKPTKAAEGWARGCGISVEQAERVATDKGEWLVHRATIEGQPTKNLLKDMVANALAKLPIPKPMRWADKTVQFIRPVHTVTMLLGDELIEGEILGVESARTLRGHRFLGEREFQISHADQYPALLKEKGSVVADFNDRKALILAKSQEKATALGGVADIEDDLLDEVTSLVEYPNVLAAKFEERFLAVPAEALVYTMKGDQKYFPIYDKDGKLLPHFIFVSNINPDDPSKIIEGNEKVVRPRLTDAEFFFKTDLKQRLEDQLPRLETVLFQQQLGTLRDKTARIEQLAGEIAKQIGADEVKAKRAGLLSKCDLMTNMVFEFTDTQGVMGMHYARHDGEDEEVAVALNEQYMPRFAGDELPKSLVASAVALADKFDTLTGIFGIGQQPKGSADPFALRRAALGALRIIVEKNLPLDLAEIVKKSSALFGDKLTNANVVEDVVEFMLGRFRAWYQDEGIAVDVIQAVLARRPTKPSDFDARVRAVSHFRALEAAEALAAANKRVSNILAKVEGELPANIDTTLCAEAAEKVLAEQVIALQAELAPLFAKGEYQVALDRLAALREPVDTFFDNVMVNAENPQLRQNRLAILNNLRNLFLQVADISLLQ.

This sequence belongs to the class-II aminoacyl-tRNA synthetase family. In terms of assembly, tetramer of two alpha and two beta subunits.

It localises to the cytoplasm. It catalyses the reaction tRNA(Gly) + glycine + ATP = glycyl-tRNA(Gly) + AMP + diphosphate. The protein is Glycine--tRNA ligase beta subunit (glyS) of Pasteurella multocida (strain Pm70).